The following is a 746-amino-acid chain: Probable ubiquitin carboxyl-terminal hydrolase MINDY-4 (746 aa).

3 disordered regions span residues 123 to 179, 198 to 254, and 319 to 342; these read DDET…SEGE, MALG…IKGE, and GKGATEASPYASNEHRRRSGFSNM. Composition is skewed to polar residues over residues 141–152 and 165–174; these read YRSQNDLQFNKS and TEAGVTSTGV. Cysteine 448 (nucleophile) is an active-site residue. Histidine 666 (proton acceptor) is an active-site residue.

The protein belongs to the MINDY deubiquitinase family. FAM188 subfamily.

The enzyme catalyses Thiol-dependent hydrolysis of ester, thioester, amide, peptide and isopeptide bonds formed by the C-terminal Gly of ubiquitin (a 76-residue protein attached to proteins as an intracellular targeting signal).. Its function is as follows. Probable hydrolase that can remove 'Lys-48'-linked conjugated ubiquitin from proteins. In Xenopus tropicalis (Western clawed frog), this protein is Probable ubiquitin carboxyl-terminal hydrolase MINDY-4 (mindy4).